The sequence spans 511 residues: FAD-dependent monooxygenase AOL_s00215g279 (511 aa).

A signal peptide spans 1 to 17 (MRFTLYGLLGFASLLHA). In terms of domain architecture, FAD-binding PCMH-type spans 85–256 (CWVNPACIVS…TEFDLRTRYS (172 aa)). Pros-8alpha-FAD histidine is present on His-122.

It belongs to the oxygen-dependent FAD-linked oxidoreductase family.

Its pathway is secondary metabolite biosynthesis; terpenoid biosynthesis. Functionally, FAD-dependent monooxygenase; part of the gene cluster that mediates the biosynthesis of sesquiterpenyl epoxy-cyclohexenoids (SECs) such as anthrobotrisins and arthrosporols, metabolites that possess a novel hybrid carbon skeleton consisting of a polyketide-derived epoxycyclohexenol combined with a terpenoid-derived monocyclic sesquiterpenol substructure (PKS-PTS hybrid). The SEC pathway plays an important role for fungal soil colonization via decreasing fungal nematode-capturing ability. Within the pathway, the FAD-dependent monooxygenase AOL_s00215g279 plays a role in the oxygenation of the phenol moiety, most likely in the epoxy formation. The pathway begins with the biosynthesis of 6-methylsalicylic acid (6-MSA), the first precursor of the polyketide-derived epoxycyclohexenol in arthrosporols, by the polyketide synthase (PKS) AOL_s00215g283 via condensation of 1 acetate and 3 malonate units. The 6-methylsalicylic acid decarboxylase AOL_s00215g281 then catalyzes the decarboxylation of 6-methylsalicylic acid to yield m-cresol. The cytochrome P450 monooxygenase AOL_s00215g282 further oxidizes m-cresol to yield toluquinol. With the assistance of the oxidoreductase AOL_s00215g277, the polyprenyl transferase AOL_s00215g276 catalyzes the farnesylation of toluquinol to produce farnesyl hydroquinone, the hybrid precursor for biosynthesis of SECs. Farnesyl hydroquinone undergoes epoxidation and then subsequent dehydrogenation to form farnesyl epoxy-quinone, the first and simplest SEC. The cytochrome P450 monooxygenase AOL_s00215g278 and the FAD-dependent monooxygenase AOL_s00215g279 might be involved in the oxygenation of the phenol moiety, most likely in the epoxy formation. The cytochrome P450 monooxygenases AOL_s00215g274 and AOL_s00215g280 are involved in specific regional ketone reductions at respectively C-4 and C-1 of farnesyl epoxy-quinone PubMed:33823587. The sequence is that of FAD-dependent monooxygenase AOL_s00215g279 from Arthrobotrys oligospora (strain ATCC 24927 / CBS 115.81 / DSM 1491) (Nematode-trapping fungus).